The following is a 708-amino-acid chain: ATP-dependent DNA helicase Hel308 (708 aa).

Residues Gln28 and 46–53 contribute to the ATP site; that span reads TATASGKS. A Helicase ATP-binding domain is found at 33 to 198; that stretch reads RAGIFDGRSV…WLGARLVESS (166 aa). The short motif at 143-146 is the DEAH box element; that stretch reads DEIH. One can recognise a Helicase C-terminal domain in the interval 231-429; the sequence is EVALAVDAVA…EPNLRAHVLG (199 aa).

Belongs to the helicase family. Hel308 subfamily. Monomer.

It carries out the reaction Couples ATP hydrolysis with the unwinding of duplex DNA by translocating in the 3'-5' direction.. The enzyme catalyses ATP + H2O = ADP + phosphate + H(+). Functionally, DNA-dependent ATPase and 3'-5' DNA helicase that may be involved in repair of stalled replication forks. The chain is ATP-dependent DNA helicase Hel308 from Pyrobaculum calidifontis (strain DSM 21063 / JCM 11548 / VA1).